We begin with the raw amino-acid sequence, 444 residues long: 23S rRNA (uracil(1939)-C(5))-methyltransferase RlmD (444 aa).

In terms of domain architecture, TRAM spans 5 to 64 (KPKLNLTSQTARIVNLSHDGRGIARINGKATFIQGALPGEVVEFQYTRVKKDFDEGKLLS). [4Fe-4S] cluster contacts are provided by cysteine 77, cysteine 83, cysteine 86, and cysteine 166. S-adenosyl-L-methionine contacts are provided by glutamine 276, phenylalanine 305, asparagine 310, glutamate 326, asparagine 353, and aspartate 374. Cysteine 400 functions as the Nucleophile in the catalytic mechanism.

It belongs to the class I-like SAM-binding methyltransferase superfamily. RNA M5U methyltransferase family. RlmD subfamily.

It carries out the reaction uridine(1939) in 23S rRNA + S-adenosyl-L-methionine = 5-methyluridine(1939) in 23S rRNA + S-adenosyl-L-homocysteine + H(+). Its function is as follows. Catalyzes the formation of 5-methyl-uridine at position 1939 (m5U1939) in 23S rRNA. This Legionella pneumophila (strain Lens) protein is 23S rRNA (uracil(1939)-C(5))-methyltransferase RlmD.